The chain runs to 1339 residues: Aldehyde oxidase 1 (1339 aa).

The region spanning 5–92 (SELLFYVNGR…GAAVTTVEGI (88 aa)) is the 2Fe-2S ferredoxin-type domain. [2Fe-2S] cluster-binding residues include Cys44, Cys49, Cys52, and Cys74. Mo-molybdopterin is bound at residue Gln113. Residues Cys114, Cys117, Cys149, and Cys151 each contribute to the [2Fe-2S] cluster site. Cys151 contacts Mo-molybdopterin. One can recognise an FAD-binding PCMH-type domain in the interval 236-421 (FGSDRMTWIS…ISVNIPYSRK (186 aa)). Residues 264 to 271 (VVMGNTSV), Ala345, Ser354, His358, Asp367, and Leu411 each bind FAD. Residues 807–808 (AF) and Met1048 each bind Mo-molybdopterin. Ser1069 carries the phosphoserine modification. Mo-molybdopterin-binding positions include 1089-1092 (GSVV), Gln1204, and Leu1269. Catalysis depends on Glu1271, which acts as the Proton acceptor; for azaheterocycle hydroxylase activity.

The protein belongs to the xanthine dehydrogenase family. As to quaternary structure, homodimer. The cofactor is [2Fe-2S] cluster. FAD is required as a cofactor. Mo-molybdopterin serves as cofactor. In terms of processing, the N-terminus is blocked. In terms of tissue distribution, expressed at high levels in liver, lung and spleen. Also expressed in kindey, eye, testis, duodenum, esophagus and thymus (at protein level).

It is found in the cytoplasm. The catalysed reaction is an aldehyde + O2 + H2O = a carboxylate + H2O2 + H(+). It carries out the reaction retinal + O2 + H2O = retinoate + H2O2 + H(+). In terms of biological role, oxidase with broad substrate specificity, oxidizing aromatic azaheterocycles, such as N1-methylnicotinamide, N-methylphthalazinium and phthalazine, as well as aldehydes, such as benzaldehyde, retinal, pyridoxal, and vanillin. Plays a key role in the metabolism of xenobiotics and drugs containing aromatic azaheterocyclic substituents. Is probably involved in the regulation of reactive oxygen species homeostasis. May be a prominent source of superoxide generation via the one-electron reduction of molecular oxygen. May also catalyze nitric oxide (NO) production via the reduction of nitrite to NO with NADH or aldehyde as electron donor. May play a role in adipogenesis. The polypeptide is Aldehyde oxidase 1 (Bos taurus (Bovine)).